Here is a 529-residue protein sequence, read N- to C-terminus: Bifunctional purine biosynthesis protein PurH (529 aa).

Positions 1 to 148 (MQQRRPVRRA…KNHKDVAIVV (148 aa)) constitute an MGS-like domain. Lys-287 bears the N6-acetyllysine mark.

This sequence belongs to the PurH family.

It carries out the reaction (6R)-10-formyltetrahydrofolate + 5-amino-1-(5-phospho-beta-D-ribosyl)imidazole-4-carboxamide = 5-formamido-1-(5-phospho-D-ribosyl)imidazole-4-carboxamide + (6S)-5,6,7,8-tetrahydrofolate. The enzyme catalyses IMP + H2O = 5-formamido-1-(5-phospho-D-ribosyl)imidazole-4-carboxamide. Its pathway is purine metabolism; IMP biosynthesis via de novo pathway; 5-formamido-1-(5-phospho-D-ribosyl)imidazole-4-carboxamide from 5-amino-1-(5-phospho-D-ribosyl)imidazole-4-carboxamide (10-formyl THF route): step 1/1. It functions in the pathway purine metabolism; IMP biosynthesis via de novo pathway; IMP from 5-formamido-1-(5-phospho-D-ribosyl)imidazole-4-carboxamide: step 1/1. The polypeptide is Bifunctional purine biosynthesis protein PurH (Escherichia coli O7:K1 (strain IAI39 / ExPEC)).